The following is a 255-amino-acid chain: 28.1 kDa virulence protein (255 aa).

Belongs to the SpvA family.

In terms of biological role, not known. This protein is involved in the virulence of salmonellas. This chain is 28.1 kDa virulence protein (mkaB), found in Salmonella typhimurium.